A 295-amino-acid polypeptide reads, in one-letter code: Aspartate carbamoyltransferase catalytic subunit (295 aa).

Carbamoyl phosphate contacts are provided by Arg49 and Thr50. Position 77 (Lys77) interacts with L-aspartate. Residues Arg99, His127, and Gln130 each contribute to the carbamoyl phosphate site. Positions 161 and 212 each coordinate L-aspartate. Carbamoyl phosphate is bound by residues Gly251 and Pro252.

This sequence belongs to the aspartate/ornithine carbamoyltransferase superfamily. ATCase family. In terms of assembly, heterododecamer (2C3:3R2) of six catalytic PyrB chains organized as two trimers (C3), and six regulatory PyrI chains organized as three dimers (R2).

It carries out the reaction carbamoyl phosphate + L-aspartate = N-carbamoyl-L-aspartate + phosphate + H(+). The protein operates within pyrimidine metabolism; UMP biosynthesis via de novo pathway; (S)-dihydroorotate from bicarbonate: step 2/3. Its function is as follows. Catalyzes the condensation of carbamoyl phosphate and aspartate to form carbamoyl aspartate and inorganic phosphate, the committed step in the de novo pyrimidine nucleotide biosynthesis pathway. This is Aspartate carbamoyltransferase catalytic subunit from Aliarcobacter butzleri (strain RM4018) (Arcobacter butzleri).